Consider the following 584-residue polypeptide: Low-affinity iron/zinc ion transport protein fet4 (584 aa).

Residues 1–28 (MTASITEIDSISEESNVESVSHLQHSPS) form a disordered region. Topologically, residues 1 to 160 (MTASITEIDS…FDLITRLAGT (160 aa)) are extracellular. A helical membrane pass occupies residues 161 to 181 (SFTFILMLIILIVWAIVGGIY). The Cytoplasmic portion of the chain corresponds to 182–277 (RAPDNWQIVM…WFDFICNYVS (96 aa)). Residues 278–298 (FMVGSIIFLVVYWIGIFIWIG) form a helical membrane-spanning segment. Residues 299 to 310 (FGRMLGWSDEWQ) lie on the Extracellular side of the membrane. A helical transmembrane segment spans residues 311 to 331 (LYINTAVAVELTFTSVFLQNV). At 332–389 (RHRHMKYIDRCVTSIFRIDSVIEEELRRMMGDKEPNEEITIKMDKINLGERSIDYYAD) the chain is on the cytoplasmic side. A helical transmembrane segment spans residues 390 to 410 (LIGSGVGVVVSTCVFVAWIAI). The Extracellular segment spans residues 411-418 (GNVMHWDS). The helical transmembrane segment at 419 to 439 (NWWLIIGTYTGLVGFLDGFVL) threads the bilayer. The Cytoplasmic segment spans residues 440-493 (RNVYFRESSKEATEIQTLIDEDYALYQKLDLPLPHEHITNYKSTFGGSLSQWIG). The helical transmembrane segment at 494–514 (WLCALPISVLFSVFVILGLII) threads the bilayer. The Extracellular segment spans residues 515–526 (AAGSLRFNETAQ). An N-linked (GlcNAc...) asparagine glycan is attached at asparagine 522. A helical membrane pass occupies residues 527-547 (LFCNTPTMIIEGALLIVLIEA). Residues 548–584 (HNIANLKRRIQFRQIHLRRLTILKMLAGDNYSTTSTV) are Cytoplasmic-facing.

This sequence belongs to the FET4 family.

It is found in the golgi apparatus membrane. Its subcellular location is the cell membrane. Its function is as follows. Required for Fe(2+) ion low affinity uptake. Has a role in zinc uptake under conditions of zinc limitation. The protein is Low-affinity iron/zinc ion transport protein fet4 (fet4) of Schizosaccharomyces pombe (strain 972 / ATCC 24843) (Fission yeast).